Reading from the N-terminus, the 101-residue chain is Small ribosomal subunit protein uS14 (101 aa).

Belongs to the universal ribosomal protein uS14 family. As to quaternary structure, part of the 30S ribosomal subunit. Contacts proteins S3 and S10.

In terms of biological role, binds 16S rRNA, required for the assembly of 30S particles and may also be responsible for determining the conformation of the 16S rRNA at the A site. This is Small ribosomal subunit protein uS14 from Janthinobacterium sp. (strain Marseille) (Minibacterium massiliensis).